The following is a 247-amino-acid chain: MLKATIDAEIFREAIEAISALVPECRLHTAEDGITTRAVDTANVAMIAFTLKKEAFDTFKATKSEIGVDISKMKNIFNMGGKGDLISLELADNAQKMAVSVHGYHYSITLLDTNTIRKDPNSPTINLPGKVVISGEDLNNAIKAAAVISDKIAMGINPKDQTFYMVAEGDTDHIQREFGKDELKSLSPVEARSLFSLDYLRDMGKVMSKATEVEVCLGIDHPVRFSFDIAGGNGHVEYLLAPRIEAD.

It belongs to the PCNA family. In terms of assembly, homotrimer. The subunits circularize to form a toroid; DNA passes through its center. Replication factor C (RFC) is required to load the toroid on the DNA.

Its function is as follows. Sliding clamp subunit that acts as a moving platform for DNA processing. Responsible for tethering the catalytic subunit of DNA polymerase and other proteins to DNA during high-speed replication. This is DNA polymerase sliding clamp from Methanoregula boonei (strain DSM 21154 / JCM 14090 / 6A8).